The sequence spans 283 residues: Pantothenate synthetase (283 aa).

Position 30-37 (30-37 (MGNLHLGH)) interacts with ATP. The active-site Proton donor is histidine 37. Position 61 (glutamine 61) interacts with (R)-pantoate. Glutamine 61 contributes to the beta-alanine binding site. ATP is bound at residue 149–152 (GQKD). Glutamine 155 lines the (R)-pantoate pocket. ATP-binding positions include isoleucine 178 and 186–189 (MSSR).

Belongs to the pantothenate synthetase family. Homodimer.

The protein resides in the cytoplasm. It catalyses the reaction (R)-pantoate + beta-alanine + ATP = (R)-pantothenate + AMP + diphosphate + H(+). The protein operates within cofactor biosynthesis; (R)-pantothenate biosynthesis; (R)-pantothenate from (R)-pantoate and beta-alanine: step 1/1. Catalyzes the condensation of pantoate with beta-alanine in an ATP-dependent reaction via a pantoyl-adenylate intermediate. The protein is Pantothenate synthetase of Shewanella pealeana (strain ATCC 700345 / ANG-SQ1).